The sequence spans 258 residues: uncharacterized protein (258 aa).

8 residues coordinate NADP(+): isoleucine 17, aspartate 53, asparagine 80, arginine 113, tyrosine 145, lysine 149, isoleucine 178, and serine 180. The Proton donor role is filled by tyrosine 145. Catalysis depends on lysine 149, which acts as the Lowers pKa of active site Tyr.

The protein belongs to the short-chain dehydrogenases/reductases (SDR) family.

Its subcellular location is the cytoplasm. It is found in the nucleus. This is an uncharacterized protein from Schizosaccharomyces pombe (strain 972 / ATCC 24843) (Fission yeast).